The sequence spans 561 residues: Arf-GAP domain and FG repeat-containing protein 1 (561 aa).

One can recognise an Arf-GAP domain in the interval 11–135 (EKHLKMLRDM…WYVPPEQAKV (125 aa)). The segment at 29–52 (CFDCDQRGPTYVNMTVGSFVCTSC) adopts a C4-type zinc-finger fold. Ser167 bears the Phosphoserine mark. The segment at 170–193 (ALHLNKGTPSQSPVVGRSQGQQQE) is disordered. Positions 176-191 (GTPSQSPVVGRSQGQQ) are enriched in polar residues. Thr177 carries the post-translational modification Phosphothreonine. Phosphoserine occurs at positions 181 and 362. Ser367 is a glycosylation site (O-linked (GlcNAc) serine). The disordered stretch occupies residues 413 to 433 (SAQTQPASSGPAPFGATPSTN).

In terms of assembly, interacts with FCHO1. Interacts with EPS15R and EPS15. O-glycosylated. In terms of tissue distribution, expressed in the testes (at protein level).

It localises to the nucleus. The protein localises to the cytoplasmic vesicle. In terms of biological role, required for vesicle docking or fusion during acrosome biogenesis. May play a role in RNA trafficking or localization. The sequence is that of Arf-GAP domain and FG repeat-containing protein 1 (Agfg1) from Mus musculus (Mouse).